A 98-amino-acid chain; its full sequence is uncharacterized protein (98 aa).

Residues 53–98 form a disordered region; the sequence is AALEGGRHRHRGESASGNGIQHGVPPNVALIPSGSTLLTPARSGHV.

This is an uncharacterized protein from Mycolicibacterium smegmatis (strain ATCC 700084 / mc(2)155) (Mycobacterium smegmatis).